Reading from the N-terminus, the 41-residue chain is Virescein (41 aa).

A Histidine amide modification is found at histidine 41.

In terms of assembly, monomer. Hemolymph.

Its subcellular location is the secreted. In terms of biological role, has antibacterial activity against Gram-positive and Gram-negative bacteria. The chain is Virescein from Heliothis virescens (Tobacco budworm moth).